Here is a 188-residue protein sequence, read N- to C-terminus: MNKKQRDEISKLLSYLLRHAPESMGLTLDRDGWSEVDDLIRKANAHGYAFDRQALNEVVETNEKKRFTLSEDDQRIRAAQGHSTVQVQVQHAEKEPPATLYHGTASRFMTSIETQGLIAGSRHHVHLTEDPETAMSVGKRYGQPVLLAVDAKGMFEAGVRFFQADNGIWLVKAVSRDSLTVLRLPIPE.

It belongs to the KptA/TPT1 family.

In terms of biological role, removes the 2'-phosphate from RNA via an intermediate in which the phosphate is ADP-ribosylated by NAD followed by a presumed transesterification to release the RNA and generate ADP-ribose 1''-2''-cyclic phosphate (APPR&gt;P). May function as an ADP-ribosylase. The polypeptide is Probable RNA 2'-phosphotransferase (Pseudomonas savastanoi pv. phaseolicola (strain 1448A / Race 6) (Pseudomonas syringae pv. phaseolicola (strain 1448A / Race 6))).